We begin with the raw amino-acid sequence, 144 residues long: uncharacterized protein (144 aa).

One can recognise a Rhodanese domain in the interval 50 to 140 (NQDKAIVVDT…YWKTDNLPLI (91 aa)).

This is an uncharacterized protein from Buchnera aphidicola subsp. Acyrthosiphon pisum (strain APS) (Acyrthosiphon pisum symbiotic bacterium).